The sequence spans 266 residues: MIINFVGNTLIIFNEDIPCDLLRKKYKELFVPTISVLDFKKKRLYRKYNNIFLYTYKNYSFLWELENNILHKVQKCLNKNGILKLIIYLNKNDVITPDKHENKNNNDIKVNIDQKDYCENYINDIFKNIKKECLYNGFINIVNETSVAENGIILNITAENPDFLSNEDNDVSSDDEDLYNNEDDKKKVVNRVCDNCTCGKKEKLLNSENKVLINEKDGEYITENVVSSCGNCYLGDAFRCASCPYKGLPAFQPGENVKLNLNNESN.

The interval 1 to 164 (MIINFVGNTL…NITAENPDFL (164 aa)) is N-terminal SAM-like domain. The segment at 165 to 185 (SNEDNDVSSDDEDLYNNEDDK) is linker. The [4Fe-4S] cluster site is built by C229, C232, C240, and C243. 2 consecutive short sequence motifs (cx2C motif) follow at residues 229–232 (CGNC) and 240–243 (CASC). Residues 229-243 (CGNCYLGDAFRCASC) form a fe-S binding site B region.

It belongs to the anamorsin family. Monomer. It depends on [4Fe-4S] cluster as a cofactor.

The protein localises to the cytoplasm. It localises to the mitochondrion intermembrane space. Functionally, component of the cytosolic iron-sulfur (Fe-S) protein assembly (CIA) machinery. Required for the maturation of extramitochondrial Fe-S proteins. Part of an electron transfer chain functioning in an early step of cytosolic Fe-S biogenesis, facilitating the de novo assembly of a [4Fe-4S] cluster on the cytosolic Fe-S scaffold complex. Electrons are transferred from NADPH via a FAD- and FMN-containing diflavin oxidoreductase. Together with the diflavin oxidoreductase, also required for the assembly of the diferric tyrosyl radical cofactor of ribonucleotide reductase (RNR), probably by providing electrons for reduction during radical cofactor maturation in the catalytic small subunit. The protein is Anamorsin homolog of Plasmodium falciparum (isolate 3D7).